The following is a 353-amino-acid chain: Ornithine racemase (353 aa).

Catalysis depends on Lys-35, which acts as the Proton acceptor. At Lys-35 the chain carries N6-(pyridoxal phosphate)lysine. Arg-128 contacts substrate.

This sequence belongs to the alanine racemase family. In terms of assembly, homodimer. Requires pyridoxal 5'-phosphate as cofactor.

The enzyme catalyses L-ornithine = D-ornithine. In terms of biological role, involved in the ornithine fermentation pathway. Catalyzes the conversion of L-ornithine to D-ornithine. OR could also racemize basic amino acids such as lysine and arginine. Serine, asparagine and alanine could be also converted by OR, but at a lower rate. The sequence is that of Ornithine racemase from Acetoanaerobium sticklandii (strain ATCC 12662 / DSM 519 / JCM 1433 / CCUG 9281 / NCIMB 10654 / HF) (Clostridium sticklandii).